A 128-amino-acid polypeptide reads, in one-letter code: Ribosome-binding factor A (128 aa).

It belongs to the RbfA family. In terms of assembly, monomer. Binds 30S ribosomal subunits, but not 50S ribosomal subunits or 70S ribosomes.

It localises to the cytoplasm. Functionally, one of several proteins that assist in the late maturation steps of the functional core of the 30S ribosomal subunit. Associates with free 30S ribosomal subunits (but not with 30S subunits that are part of 70S ribosomes or polysomes). Required for efficient processing of 16S rRNA. May interact with the 5'-terminal helix region of 16S rRNA. The chain is Ribosome-binding factor A from Haemophilus influenzae (strain ATCC 51907 / DSM 11121 / KW20 / Rd).